Consider the following 70-residue polypeptide: Beta-defensin 107A (70 aa).

A signal peptide spans 1 to 26; that stretch reads MPGAMKIFFFIFAALILLAQIFQART. 2 disulfides stabilise this stretch: Cys41-Cys55 and Cys45-Cys64.

It belongs to the beta-defensin family.

The protein localises to the secreted. Its function is as follows. Has antibacterial activity. In Pan troglodytes (Chimpanzee), this protein is Beta-defensin 107A (DEFB107A).